The primary structure comprises 396 residues: L-lactate dehydrogenase (396 aa).

Residues 1-380 (MIISAASDYR…SGDSLVQELG (380 aa)) enclose the FMN hydroxy acid dehydrogenase domain. Y24 is a binding site for substrate. Positions 106 and 127 each coordinate FMN. Y129 contributes to the substrate binding site. Residue T155 coordinates FMN. Substrate is bound at residue R164. K251 contributes to the FMN binding site. Residue H275 is the Proton acceptor of the active site. Residue R278 coordinates substrate. FMN is bound at residue 306-330 (DSGIRNGLDVVRMIALGADTVLLGR).

It belongs to the FMN-dependent alpha-hydroxy acid dehydrogenase family. FMN is required as a cofactor.

The protein localises to the cell inner membrane. The enzyme catalyses (S)-lactate + A = pyruvate + AH2. In terms of biological role, catalyzes the conversion of L-lactate to pyruvate. Is coupled to the respiratory chain. The chain is L-lactate dehydrogenase from Salmonella typhimurium (strain LT2 / SGSC1412 / ATCC 700720).